A 318-amino-acid polypeptide reads, in one-letter code: Ribosomal RNA small subunit methyltransferase H (318 aa).

Residues 35–37, aspartate 55, phenylalanine 84, aspartate 105, and glutamine 112 contribute to the S-adenosyl-L-methionine site; that span reads AGH. The tract at residues 294 to 318 is disordered; that stretch reads SDSELSENNRSRSAKLRIAEKIKSR.

Belongs to the methyltransferase superfamily. RsmH family.

It localises to the cytoplasm. It carries out the reaction cytidine(1402) in 16S rRNA + S-adenosyl-L-methionine = N(4)-methylcytidine(1402) in 16S rRNA + S-adenosyl-L-homocysteine + H(+). Functionally, specifically methylates the N4 position of cytidine in position 1402 (C1402) of 16S rRNA. This chain is Ribosomal RNA small subunit methyltransferase H, found in Enterococcus faecalis (strain ATCC 700802 / V583).